We begin with the raw amino-acid sequence, 247 residues long: Cytochrome c oxidase subunit 2 (247 aa).

Topologically, residues 12–38 (DVPTPWGLYFQDSSTPNQEGIIELHDN) are mitochondrial intermembrane. A helical membrane pass occupies residues 39–59 (IMFYLVLILCTVSWLLFSIVK). At 60–78 (DSSKNPLPHKYLVHGQTIE) the chain is on the mitochondrial matrix side. Residues 79–101 (IIWTILPAVVLLIIAFPSFILLY) form a helical membrane-spanning segment. The Mitochondrial intermembrane portion of the chain corresponds to 102–247 (LCDEVISPAM…KEFLTWLNEQ (146 aa)). Cu cation-binding residues include His182, Cys217, Glu219, Cys221, His225, and Met228. Glu219 serves as a coordination point for Mg(2+).

It belongs to the cytochrome c oxidase subunit 2 family. In terms of assembly, component of the cytochrome c oxidase (complex IV, CIV), a multisubunit enzyme composed of a catalytic core of 3 subunits and several supernumerary subunits. The complex exists as a monomer or a dimer and forms supercomplexes (SCs) in the inner mitochondrial membrane with ubiquinol-cytochrome c oxidoreductase (cytochrome b-c1 complex, complex III, CIII). Requires Cu cation as cofactor. Post-translationally, the signal sequence of COX2 is processed by IMP1.

The protein resides in the mitochondrion inner membrane. It catalyses the reaction 4 Fe(II)-[cytochrome c] + O2 + 8 H(+)(in) = 4 Fe(III)-[cytochrome c] + 2 H2O + 4 H(+)(out). In terms of biological role, component of the cytochrome c oxidase, the last enzyme in the mitochondrial electron transport chain which drives oxidative phosphorylation. The respiratory chain contains 3 multisubunit complexes succinate dehydrogenase (complex II, CII), ubiquinol-cytochrome c oxidoreductase (cytochrome b-c1 complex, complex III, CIII) and cytochrome c oxidase (complex IV, CIV), that cooperate to transfer electrons derived from NADH and succinate to molecular oxygen, creating an electrochemical gradient over the inner membrane that drives transmembrane transport and the ATP synthase. Cytochrome c oxidase is the component of the respiratory chain that catalyzes the reduction of oxygen to water. Electrons originating from reduced cytochrome c in the intermembrane space (IMS) are transferred via the dinuclear copper A center (CU(A)) of subunit 2 and heme A of subunit 1 to the active site in subunit 1, a binuclear center (BNC) formed by heme A3 and copper B (CU(B)). The BNC reduces molecular oxygen to 2 water molecules using 4 electrons from cytochrome c in the IMS and 4 protons from the mitochondrial matrix. In Cyberlindnera saturnus (Yeast), this protein is Cytochrome c oxidase subunit 2 (COX2).